Reading from the N-terminus, the 311-residue chain is Transmembrane protein DDB_G0273707/DDB_G0273361 (311 aa).

Positions 1–113 are disordered; the sequence is MNEIEVDNLS…NNNNNKNENN (113 aa). N-linked (GlcNAc...) asparagine glycosylation occurs at N8. Polar residues predominate over residues 9 to 18; it reads LSHTNKNVAT. N35, N38, N62, and N76 each carry an N-linked (GlcNAc...) asparagine glycan. Low complexity-rich tracts occupy residues 37 to 67 and 76 to 111; these read SNNS…SNSN and NNSN…NKNE. Residues 95–124 adopt a coiled-coil conformation; it reads NNNNNNNNNNNNNNKNENNNKIKNEKINIL. Transmembrane regions (helical) follow at residues 150–170, 181–201, 208–228, 235–255, and 276–296; these read LEEI…LALL, IFLL…PKSP, LVLG…ALVY, VACA…KSIH, and FYYI…TALI.

The protein resides in the membrane. The protein is Transmembrane protein DDB_G0273707/DDB_G0273361 of Dictyostelium discoideum (Social amoeba).